The following is a 510-amino-acid chain: DAP3-binding cell death enhancer 1 (510 aa).

The N-terminal 23 residues, 1–23, are a transit peptide targeting the mitochondrion; it reads MWRLTGILGRALPRLLGPGFRGI. Disordered regions lie at residues 19–61 and 142–185; these read GFRG…SRDP and VLPR…SGLL. Residues 24 to 101 constitute a propeptide, extended MTS; it reads TPKPTSSDGS…AVLALHLARQ (78 aa). Over residues 35–45 the composition is skewed to low complexity; it reads TTSPTLPLTRL. Basic and acidic residues-rich tracts occupy residues 46–61 and 155–167; these read SFDRSGSHGSKRSRDP and GLREPRQGQEDHP. Residues 169-181 are compositionally biased toward polar residues; it reads APSQCLPSDSSLR. TPR repeat units follow at residues 213-245, 246-278, 279-313, 314-351, 352-385, 386-423, and 471-499; these read AHPPGGKNEQDKAKALPLEEAVTSIQQLFQLSV, AITFNFLGTENIKTGDYTAAFSYFQKAADRGYS, KAQYNVGLCLEHGRGTPRDLSKAILFYHLAAVQGH, SLAQYRYARCLLQSPGSLSDPERERAVSLLKQAADSGL, TEAQAFLGVLFTKEPHLDEQRAVKYLWLAASNGD, SQSRFHLGICYEKGLGAQRNLGEAVKCYQQAAAMGNEP, and ASSTGNLGLLCRSGHLGASHGAPSRTIPS. The short motif at 307 to 326 is the SIFI-degron element; sequence LAAVQGHSLAQYRYARCLLQ.

The protein belongs to the DELE1 family. Interacts with DAP3. As to quaternary structure, interacts (via TPR repeats) with EIF2AK1/HRI; activating the protein kinase activity of EIF2AK1/HRI, thereby promoting the integrated stress response (ISR). In terms of assembly, homooctamer; oligomerization is required to activate EIF2AK1/HRI. Interacts (via TPR repeats) with EIF2AK1/HRI; activating the protein kinase activity of EIF2AK1/HRI, thereby promoting the integrated stress response (ISR). In terms of processing, unstable protein in absence of stress: imported in the mitochondrial matrix following processing by the mitochondrial-processing peptidase (MPP), where it is degraded by LONP1. Stabilized in response to iron deficiency: iron deficiency impairs mitochondrial import, promoting localization at the mitochondrial surface and stabilization. Cleaved by OMA1 in response to mitochondrial stress, generating the DAP3-binding cell death enhancer 1 short form (DELE1(S) or S-DELE1) that accumulates in the cytosol and activates the protein kinase activity of EIF2AK1/HRI. Protein cleavage by OMA1 can take place at different positions, and apparently does not require a specific sequence motif. Ubiquitinated and degraded by the SIFI complex once the mitochondrial stress has been resolved, thereby providing stress response silencing. Within the SIFI complex, UBR4 initiates ubiquitin chain that are further elongated or branched by KCMF1.

It localises to the mitochondrion. It is found in the mitochondrion outer membrane. Its subcellular location is the mitochondrion inner membrane. The protein localises to the cytoplasm. The protein resides in the cytosol. Functionally, protein kinase activator that acts as a key activator of the integrated stress response (ISR) following various stresses, such as iron deficiency, mitochondrial stress or mitochondrial DNA breaks. Detects impaired protein import and processing in mitochondria, activating the ISR. May also required for the induction of death receptor-mediated apoptosis through the regulation of caspase activation. Protein kinase activator that activates the ISR in response to iron deficiency: iron deficiency impairs mitochondrial import, promoting DELE1 localization at the mitochondrial surface, where it binds and activates EIF2AK1/HRI to trigger the ISR. Its function is as follows. Protein kinase activator generated by protein cleavage in response to mitochondrial stress, which accumulates in the cytosol and specifically binds to and activates the protein kinase activity of EIF2AK1/HRI. It thereby activates the integrated stress response (ISR): EIF2AK1/HRI activation promotes eIF-2-alpha (EIF2S1) phosphorylation, leading to a decrease in global protein synthesis and the induction of selected genes, including the transcription factor ATF4, the master transcriptional regulator of the ISR. Also acts as an activator of PRKN-independent mitophagy: activates the protein kinase activity of EIF2AK1/HRI in response to mitochondrial damage, promoting eIF-2-alpha (EIF2S1) phosphorylation, leading to mitochondrial localization of EIF2S1 followed by induction of mitophagy. The sequence is that of DAP3-binding cell death enhancer 1 from Mus musculus (Mouse).